A 259-amino-acid polypeptide reads, in one-letter code: Phosphate import ATP-binding protein PstB (259 aa).

The ABC transporter domain occupies 5–248; it reads IEVNDLNVYY…NIIFSNPSAQ (244 aa). 37–44 serves as a coordination point for ATP; it reads GPSGCGKS.

The protein belongs to the ABC transporter superfamily. Phosphate importer (TC 3.A.1.7) family. As to quaternary structure, the complex is composed of two ATP-binding proteins (PstB), two transmembrane proteins (PstC and PstA) and a solute-binding protein (PstS).

The protein resides in the cell membrane. The enzyme catalyses phosphate(out) + ATP + H2O = ADP + 2 phosphate(in) + H(+). Functionally, part of the ABC transporter complex PstSACB involved in phosphate import. Responsible for energy coupling to the transport system. The protein is Phosphate import ATP-binding protein PstB of Leifsonia xyli subsp. xyli (strain CTCB07).